The primary structure comprises 624 residues: Protein NRT1/ PTR FAMILY 6.1 (624 aa).

The disordered stretch occupies residues 1-20; sequence MVASEIKSPVSVPETPGSSS. A run of 2 helical transmembrane segments spans residues 83–100 and 114–134; these read MAYFGLSVNMVAFMFYVM and FLGISQASSVLGGFLADAYLG. T138 carries the phosphothreonine modification. Helical transmembrane passes span 139–159, 184–204, 230–250, 258–278, 378–398, 422–442, 459–479, 504–524, 537–557, and 585–605; these read IAIFTTMYLVGLIGITLGASL, SWQMLYLYTVLYITGFGAAGI, FFNFFYLSVTLGAIIAFTLVV, WGMAFGTLAVAMGISNALFFA, LIPIPTCTIMLSLVLTEYLTL, VFPGLSIFLILSLYYSVFVPI, VGIGLAVSIISVAWAGLFENY, WLLIQYCLIGIAEVFCIVGLL, SIGSAYAALAGGLGCFAATIL, and CLYWLLTLLSFLNFCVFLWSA.

The protein belongs to the major facilitator superfamily. Proton-dependent oligopeptide transporter (POT/PTR) (TC 2.A.17) family. As to expression, expressed in flower and siliques.

Its subcellular location is the membrane. In Arabidopsis thaliana (Mouse-ear cress), this protein is Protein NRT1/ PTR FAMILY 6.1 (NPF6.1).